The sequence spans 102 residues: MFAIIRTGGKQLRVSEGQEIFVEKLPINPEQNYEFKEVLAVYGEKSILGQPYVEGAKVQAQVIKNDRAKKIIVFKYKRRKKYRCKQGHRQAYTKLLITKIIA.

The protein belongs to the bacterial ribosomal protein bL21 family. As to quaternary structure, part of the 50S ribosomal subunit. Contacts protein L20.

Its function is as follows. This protein binds to 23S rRNA in the presence of protein L20. The sequence is that of Large ribosomal subunit protein bL21 from Phytoplasma australiense.